Consider the following 336-residue polypeptide: DNA-directed RNA polymerase subunit alpha (336 aa).

The tract at residues 1-238 is alpha N-terminal domain (alpha-NTD); the sequence is MNDLDLNLVP…NLFLPFLQAE (238 aa). Residues 267 to 336 are alpha C-terminal domain (alpha-CTD); that stretch reads AKKVTFQHIF…LQKRFGMRLQ (70 aa).

The protein belongs to the RNA polymerase alpha chain family. In terms of assembly, in plastids the minimal PEP RNA polymerase catalytic core is composed of four subunits: alpha, beta, beta', and beta''. When a (nuclear-encoded) sigma factor is associated with the core the holoenzyme is formed, which can initiate transcription.

The protein resides in the plastid. It is found in the chloroplast. It catalyses the reaction RNA(n) + a ribonucleoside 5'-triphosphate = RNA(n+1) + diphosphate. In terms of biological role, DNA-dependent RNA polymerase catalyzes the transcription of DNA into RNA using the four ribonucleoside triphosphates as substrates. This is DNA-directed RNA polymerase subunit alpha from Huperzia lucidula (Shining clubmoss).